Here is a 668-residue protein sequence, read N- to C-terminus: Acyl-CoA-binding domain-containing protein 4 (668 aa).

The ACB domain maps to 12-106 (YPERFYAAAS…LEEDDPGWYS (95 aa)). An acyl-CoA is bound by residues lysine 33, 48–52 (YALYQ), and lysine 74. Kelch repeat units lie at residues 195-242 (KMYI…TLLA), 255-305 (KLLS…MVGK), 307-356 (LVIF…VHAE), 358-407 (FLLI…TIGE), 408-456 (NWFI…LVVS), and 463-508 (VLVA…VNNA). Serine 515 and serine 520 each carry phosphoserine. Residues 538–647 (KVEGNSERII…EQAAMNAKRQ (110 aa)) adopt a coiled-coil conformation. The segment at 639–668 (QAAMNAKRQGSGGVWGWLAGSPQEKDDDSP) is disordered.

It belongs to the ACBP family. In terms of assembly, interacts with RAP2-3/EBP, an ethylene-responsive element binding protein. As to expression, mostly expressed in roots, stems, and leaves, and, to a lower extent, in flowers and siliques.

Its subcellular location is the cytoplasm. Its function is as follows. Binds medium- and long-chain acyl-CoA esters with very high affinity. Can interact in vitro with oleoyl-CoA, barely with palmitoyl-CoA, but not with arachidonyl-CoA. May function as an intracellular carrier of acyl-CoA esters. Plays a role in the biosynthesis of membrane lipids including galactolipids and phospholipids. The sequence is that of Acyl-CoA-binding domain-containing protein 4 (ACBP4) from Arabidopsis thaliana (Mouse-ear cress).